The sequence spans 207 residues: Probable GTP-binding protein EngB (207 aa).

An EngB-type G domain is found at 23–203 (GAPEVCFVGR…GAHIENWISP (181 aa)). Residues 31–38 (GRSNAGKS), 58–62 (GRTRL), 83–86 (DLPG), 150–153 (TKAD), and 182–184 (FSS) each bind GTP. Mg(2+) contacts are provided by S38 and T60.

It belongs to the TRAFAC class TrmE-Era-EngA-EngB-Septin-like GTPase superfamily. EngB GTPase family. It depends on Mg(2+) as a cofactor.

Necessary for normal cell division and for the maintenance of normal septation. This chain is Probable GTP-binding protein EngB, found in Bordetella bronchiseptica (strain ATCC BAA-588 / NCTC 13252 / RB50) (Alcaligenes bronchisepticus).